The sequence spans 303 residues: Eukaryotic translation initiation factor 3 subunit G (303 aa).

Positions 1-38 (MATQTKHDWADDEDLEETTTTTAPTTDLPPPQKIQNKD) are disordered. The 79-residue stretch at 223 to 301 (ATLRVTNVSE…LILRVEFAKK (79 aa)) folds into the RRM domain.

The protein belongs to the eIF-3 subunit G family. As to quaternary structure, component of the eukaryotic translation initiation factor 3 (eIF-3) complex.

The protein resides in the cytoplasm. RNA-binding component of the eukaryotic translation initiation factor 3 (eIF-3) complex, which is involved in protein synthesis of a specialized repertoire of mRNAs and, together with other initiation factors, stimulates binding of mRNA and methionyl-tRNAi to the 40S ribosome. The eIF-3 complex specifically targets and initiates translation of a subset of mRNAs involved in cell proliferation. This subunit can bind 18S rRNA. The sequence is that of Eukaryotic translation initiation factor 3 subunit G from Chaetomium globosum (strain ATCC 6205 / CBS 148.51 / DSM 1962 / NBRC 6347 / NRRL 1970) (Soil fungus).